The chain runs to 387 residues: Alpha-sarcoglycan (387 aa).

Positions M1 to A23 are cleaved as a signal peptide. The Extracellular portion of the chain corresponds to Q24–T293. 2 N-linked (GlcNAc...) asparagine glycosylation sites follow: N174 and N246. Residues L294 to F314 form a helical membrane-spanning segment. Residues R315–H387 are Cytoplasmic-facing. Phosphoserine is present on S377.

This sequence belongs to the sarcoglycan alpha/epsilon family. As to quaternary structure, cross-link to form 2 major subcomplexes: one consisting of SGCB, SGCD and SGCG and the other consisting of SGCB and SGCD. The association between SGCB and SGCG is particularly strong while SGCA is loosely associated with the other sarcoglycans. Interacts with the syntrophin SNTA1. As to expression, striated muscle, both skeletal and cardiac.

Its subcellular location is the cell membrane. It is found in the sarcolemma. It localises to the cytoplasm. The protein localises to the cytoskeleton. Functionally, component of the sarcoglycan complex, a subcomplex of the dystrophin-glycoprotein complex which forms a link between the F-actin cytoskeleton and the extracellular matrix. The chain is Alpha-sarcoglycan (Sgca) from Mus musculus (Mouse).